The sequence spans 189 residues: Putative transcription factor ovo-like protein 3 (189 aa).

The interval 1 to 20 is disordered; sequence MPRVFLVRSRRPQPPNWSHL. 4 consecutive C2H2-type zinc fingers follow at residues 69-91, 97-119, 125-148, and 164-186; these read LGCP…LKCH, HVCH…MRTH, FRCG…AKVH, and HVCE…RTLH.

It belongs to the krueppel C2H2-type zinc-finger protein family.

The protein resides in the nucleus. In terms of biological role, may act as a transcription regulator. This is Putative transcription factor ovo-like protein 3 (Ovol3) from Mus musculus (Mouse).